We begin with the raw amino-acid sequence, 1274 residues long: DENN domain-containing protein 5B (1274 aa).

At Ser-2 the chain carries N-acetylserine. A uDENN domain is found at 39–244; it reads DELAGENFDQ…EVPLPPPGRS (206 aa). Residues Ser-49 and Ser-178 each carry the phosphoserine modification. The region spanning 263 to 399 is the cDENN domain; it reads ELPLSDYPLR…VDFIQELSEV (137 aa). The dDENN domain maps to 401-581; the sequence is VQFGIPPEGS…DNKIMSQWEE (181 aa). Positions 772–932 constitute an RUN 1 domain; that stretch reads LEENTLIASL…DYFCFTSVFT (161 aa). Ser-822 is modified (phosphoserine). The chain crosses the membrane as a helical span at residues 916-936; the sequence is LLSLNAVDYFCFTSVFTTIMI. The PLAT domain occupies 936–1044; the sequence is IPYRSVIIPI…DDGSLERILI (109 aa). Thr-1062 carries the post-translational modification Phosphothreonine. Phosphoserine is present on residues Ser-1068, Ser-1076, and Ser-1079. The RUN 2 domain maps to 1118 to 1267; sequence TVLLCGENGL…QDFTIVLEGS (150 aa).

The protein belongs to the RAB6IP1 family.

It localises to the membrane. Functionally, guanine nucleotide exchange factor (GEF) which may activate RAB39A and/or RAB39B. Promotes the exchange of GDP to GTP, converting inactive GDP-bound Rab proteins into their active GTP-bound form. This chain is DENN domain-containing protein 5B (DENND5B), found in Homo sapiens (Human).